We begin with the raw amino-acid sequence, 554 residues long: Perforin-1 (554 aa).

The signal sequence occupies residues Met1–Ala20. Cystine bridges form between Cys22–Cys75, Cys30–Cys72, and Cys101–Cys175. The 349-residue stretch at Thr26 to Arg374 folds into the MACPF domain. Residues Trp128–Gly148 traverse the membrane as a beta stranded segment. The N-linked (GlcNAc...) asparagine glycan is linked to Asn204. 4 disulfide bridges follow: Cys241-Cys407, Cys376-Cys392, Cys380-Cys394, and Cys396-Cys406. Residues Cys256–Cys278 traverse the membrane as a beta stranded segment. Residues Asp375–Cys407 enclose the EGF-like domain. The C2 domain occupies Val395–His513. Asn400 is a glycosylation site (N-linked (GlcNAc...) asparagine). 12 residues coordinate Ca(2+): Gly428, Asp429, Thr432, Asp435, Asn454, Asp483, Ala484, Asp485, Trp488, Asp489, Asp490, and Asp491. Disulfide bonds link Cys496–Cys509 and Cys524–Cys533. An N-linked (GlcNAc...) asparagine glycan is attached at Asn548.

It belongs to the complement C6/C7/C8/C9 family. As to quaternary structure, monomer, as soluble protein. Homooligomer; homooligomerizes to form a pore-forming ring. Ca(2+) is required as a cofactor. Post-translationally, N-glycosylated. In terms of tissue distribution, detected in large granular lymphocytes and lymphokine-activated killer cells.

The protein localises to the cytolytic granule. Its subcellular location is the secreted. It is found in the cell membrane. The protein resides in the endosome lumen. In terms of biological role, pore-forming protein that plays a key role in granzyme-mediated programmed cell death, and in defense against virus-infected or neoplastic cells. Can insert into the membrane of target cells in its calcium-bound form, oligomerize and form large pores. Promotes cytolysis and apoptosis of target cells by mediating the passage and uptake of cytotoxic granzymes. Facilitates the delivery of cationic cargo protein, while anionic or neural proteins are not delivered efficiently. Perforin pores allow the release of mature caspase-7 (CASP7) into the extracellular milieu. This is Perforin-1 (Prf1) from Rattus norvegicus (Rat).